The sequence spans 190 residues: Protein GrpE (190 aa).

A compositionally biased stretch (polar residues) spans 1-18 (MTETPNTSSEEIQTSEPS). Positions 1-21 (MTETPNTSSEEIQTSEPSPDN) are disordered.

It belongs to the GrpE family. Homodimer.

The protein localises to the cytoplasm. Participates actively in the response to hyperosmotic and heat shock by preventing the aggregation of stress-denatured proteins, in association with DnaK and GrpE. It is the nucleotide exchange factor for DnaK and may function as a thermosensor. Unfolded proteins bind initially to DnaJ; upon interaction with the DnaJ-bound protein, DnaK hydrolyzes its bound ATP, resulting in the formation of a stable complex. GrpE releases ADP from DnaK; ATP binding to DnaK triggers the release of the substrate protein, thus completing the reaction cycle. Several rounds of ATP-dependent interactions between DnaJ, DnaK and GrpE are required for fully efficient folding. This chain is Protein GrpE, found in Chlamydia trachomatis serovar L2b (strain UCH-1/proctitis).